Reading from the N-terminus, the 590-residue chain is Glypican-3 (590 aa).

Residues 1–25 (MMPGLKLYGALILCVLVLPFSRPSS) form the signal peptide. Disulfide bonds link Cys30-Cys67, Cys60-Cys255, Cys68-Cys258, Cys190-Cys342, Cys245-Cys278, Cys267-Cys418, and Cys271-Cys406. Asn119 and Asn234 each carry an N-linked (GlcNAc...) asparagine glycan. Asn414 is a glycosylation site (N-linked (GlcNAc...) asparagine). 2 disordered regions span residues 429–450 (PGPG…TPEP) and 476–520 (WRAR…SGLG). Over residues 495–513 (TDEDEEGLESGDCDDEDEC) the composition is skewed to acidic residues. 2 O-linked (Xyl...) (glycosaminoglycan) serine glycosylation sites follow: Ser504 and Ser517.

The protein belongs to the glypican family. In terms of assembly, heterodimer; disulfide-linked. Cleavage by a furin-like convertase results in production of alpha and beta chains which form a disulfide-linked heterodimer. Post-translationally, O-glycosylated; contains heparan sulfate and/or chondroitin sulfate. Cleaved intracellularly by a furin-like convertase to generate 2 subunits, alpha and beta, which remain associated through disulfide bonds and are associated with the cell surface via the GPI-anchor. This processing is essential for its role in inhibition of hedgehog signaling. A second proteolytic event may result in cleavage of the protein on the cell surface, separating it from the GPI-anchor and leading to its shedding from the cell surface. In terms of tissue distribution, maternally expressed and is almost ubiquitous during blastula and gastrula stages but becomes restricted to the prospective hindbrain by 24 hours post-fertilization.

Its subcellular location is the cell membrane. Functionally, cell surface proteoglycan. Negatively regulates the hedgehog signaling pathway. Positively regulates the canonical and non-canonical Wnt signaling pathways. Binds to CD81 which decreases the availability of free CD81 for binding to the transcriptional repressor HHEX, resulting in nuclear translocation of HHEX and transcriptional repression. Inhibits the dipeptidyl peptidase activity of DPP4. Plays a role in limb patterning and skeletal development. Modulates the effects of growth factors on renal branching morphogenesis. Required for coronary vascular development. Plays a role in regulating cell movements during gastrulation. This Danio rerio (Zebrafish) protein is Glypican-3.